Consider the following 438-residue polypeptide: Xylose isomerase (438 aa).

Catalysis depends on residues histidine 100 and aspartate 103. Mg(2+) is bound by residues glutamate 231, glutamate 267, histidine 270, aspartate 295, aspartate 306, aspartate 308, and aspartate 338.

The protein belongs to the xylose isomerase family. Homotetramer. Mg(2+) serves as cofactor.

Its subcellular location is the cytoplasm. It carries out the reaction alpha-D-xylose = alpha-D-xylulofuranose. This is Xylose isomerase from Pseudomonas syringae pv. syringae (strain B728a).